The primary structure comprises 144 residues: Large ribosomal subunit protein uL13 (144 aa).

This sequence belongs to the universal ribosomal protein uL13 family. In terms of assembly, part of the 50S ribosomal subunit.

In terms of biological role, this protein is one of the early assembly proteins of the 50S ribosomal subunit, although it is not seen to bind rRNA by itself. It is important during the early stages of 50S assembly. This Clostridium botulinum (strain Alaska E43 / Type E3) protein is Large ribosomal subunit protein uL13.